A 447-amino-acid polypeptide reads, in one-letter code: Ion-translocating oxidoreductase complex subunit C (447 aa).

4Fe-4S ferredoxin-type domains follow at residues 359 to 389 and 399 to 430; these read AEVL…GRIA and RCRE…LIRY. Cysteine 369, cysteine 372, cysteine 375, cysteine 379, cysteine 408, cysteine 411, cysteine 414, and cysteine 418 together coordinate [4Fe-4S] cluster.

The protein belongs to the 4Fe4S bacterial-type ferredoxin family. RnfC subfamily. As to quaternary structure, the Rnf complex is probably composed of eight subunits, including RnfA, RnfB, RnfC, RnfD, RnfE and RnfG. It depends on [4Fe-4S] cluster as a cofactor.

Its subcellular location is the cell membrane. Functionally, part of a membrane-bound complex that couples electron transfer with translocation of ions across the membrane. Catalyzes Na(+) transport, most probably coupled to electron transfer from reduced ferredoxin to methanophenazine and heterodisulfide reductase. Involved in heterodisulfide reduction during methanogenesis from acetate. In Methanosarcina acetivorans (strain ATCC 35395 / DSM 2834 / JCM 12185 / C2A), this protein is Ion-translocating oxidoreductase complex subunit C.